Reading from the N-terminus, the 975-residue chain is Protein HIRA (975 aa).

WD repeat units follow at residues Arg10–Asp50, Asp64–Glu103, Gly123–Val162, Gly165–Arg204, Gly214–Asp256, Gly259–Val331, and Phe335–Arg374. Over residues Lys418–Ser433 the composition is skewed to low complexity. Disordered regions lie at residues Lys418–Asn510 and Asn948–Ser975. Residues Asp435–Asn445 are compositionally biased toward polar residues. Residues Lys478 to Ile492 are compositionally biased toward basic and acidic residues. A compositionally biased stretch (polar residues) spans Pro499–Asn510. The stretch at Ala923–Val954 forms a coiled coil.

It belongs to the WD repeat HIR1 family.

It is found in the nucleus. Its function is as follows. Histone chaperone involved in maintining knox genes silencing throughout leaf development. The protein is Protein HIRA of Oryza sativa subsp. japonica (Rice).